The chain runs to 1717 residues: DNA-directed RNA polymerase I subunit RPA1 (1717 aa).

The Zn(2+) site is built by Cys64, Cys67, Cys74, His77, Cys104, and Cys107. The tract at residues 110–201 is clamp; the sequence is LTCPRAAIYL…VAQFWKTHMA (92 aa). The Zn(2+) site is built by Cys205 and Cys208. Residues 327-433 form a clamp region; sequence FTNGQTVNLQ…IRQILEKKEG (107 aa). The rudder stretch occupies residues 410 to 423; it reads DSEMDKLMLEKYPG. Positions 431, 436, and 443 each coordinate DNA. Residues 475 to 549 form an involved in RRN3 binding to Pol I complex region; it reads YPQPVTPWNV…QGTKVVCRHV (75 aa). RNA is bound at residue Arg559. Mg(2+)-binding residues include Asp595, Asp597, and Asp599. Asp599 provides a ligand contact to RNA. A funnel region spans residues 812 to 890; it reads KPNADVVRQR…NEINKACMPL (79 aa). Residues 967 to 1008 are bridging helix; that stretch reads RPPEFFFHCMAGREGLVDTAVKTSRSGYLQRCIIKHLEGLVI. Residues 1067-1162 are mediates the interaction with TOP2A; it reads ADPQKVLGHI…SLSVWRPDIY (96 aa). The tract at residues 1214-1255 is trigger loop; the sequence is PGEAVGLLAAQSIGEPSTQMTLNTFHFAGRGEMNVTLGIPRL. Position 1256 (Arg1256) interacts with DNA. Residues 1372–1493 are disordered; that stretch reads RNVNSRRATQ…RRHSRPQGAE (122 aa). Residues 1380-1397 are compositionally biased toward basic and acidic residues; sequence TQKDLNDTEDSGRSQREE. Ser1393 bears the Phosphoserine mark. Acidic residues-rich tracts occupy residues 1398-1419 and 1429-1450; these read ERDE…DADA and EEEV…EVQE. Residues 1452–1464 show a composition bias toward basic and acidic residues; that stretch reads GNIKGDGVHQGHE. Acidic residues predominate over residues 1465–1477; that stretch reads PDEEEHLGLEEEE.

Belongs to the RNA polymerase beta' chain family. As to quaternary structure, component of the RNA polymerase I (Pol I) complex consisting of 13 subunits: a ten-subunit catalytic core composed of POLR1A/RPA1, POLR1B/RPA2, POLR1C/RPAC1, POLR1D/RPAC2, POLR1H/RPA12, POLR2E/RPABC1, POLR2F/RPABC2, POLR2H/RPABC3, POLR2K/RPABC4 and POLR2L/RPABC5; a mobile stalk subunit POLR1F/RPA43 protruding from the core and additional subunits homologous to general transcription factors POLR1E/RPA49 and POLR1G/RPA34. Part of Pol I pre-initiation complex (PIC), in which Pol I core assembles with RRN3 and promoter-bound UTBF and SL1/TIF-IB complex. Interacts (via dock II domain) with TOP2A; this interaction may assist Pol I transcription initiation by releasing supercoils occurring during DNA unwinding. Interacts with CAVIN1; this interaction induces the dissociation of Pol I complex paused at rDNA terminator sequences. Interacts with MYO1C. Interacts with ERBB2. Interacts with DDX11. Interacts with RECQL5. Mg(2+) serves as cofactor. In terms of processing, phosphorylated.

Its subcellular location is the nucleus. The protein resides in the nucleolus. It localises to the chromosome. The enzyme catalyses RNA(n) + a ribonucleoside 5'-triphosphate = RNA(n+1) + diphosphate. Functionally, catalytic core component of RNA polymerase I (Pol I), a DNA-dependent RNA polymerase which synthesizes ribosomal RNA precursors using the four ribonucleoside triphosphates as substrates. Transcribes 47S pre-rRNAs from multicopy rRNA gene clusters, giving rise to 5.8S, 18S and 28S ribosomal RNAs. Pol I-mediated transcription cycle proceeds through transcription initiation, transcription elongation and transcription termination stages. During transcription initiation, Pol I pre-initiation complex (PIC) is recruited by the selectivity factor 1 (SL1/TIF-IB) complex bound to the core promoter that precedes an rDNA repeat unit. The PIC assembly bends the promoter favoring the formation of the transcription bubble and promoter escape. Once the polymerase has escaped from the promoter it enters the elongation phase during which RNA is actively polymerized, based on complementarity with the template DNA strand. Highly processive, assembles in structures referred to as 'Miller trees' where many elongating Pol I complexes queue and transcribe the same rDNA coding regions. At terminator sequences downstream of the rDNA gene, PTRF interacts with Pol I and halts Pol I transcription leading to the release of the RNA transcript and polymerase from the DNA. Forms Pol I active center together with the second largest subunit POLR1B/RPA2. Appends one nucleotide at a time to the 3' end of the nascent RNA, with POLR1A/RPA1 contributing a Mg(2+)-coordinating DxDGD motif, and POLR1B/RPA2 participating in the coordination of a second Mg(2+) ion and providing lysine residues believed to facilitate Watson-Crick base pairing between the incoming nucleotide and the template base. Typically, Mg(2+) ions direct a 5' nucleoside triphosphate to form a phosphodiester bond with the 3' hydroxyl of the preceding nucleotide of the nascent RNA, with the elimination of pyrophosphate. Has proofreading activity: Pauses and backtracks to allow the cleavage of a missincorporated nucleotide via POLR1H/RPA12. High Pol I processivity is associated with decreased transcription fidelity. The protein is DNA-directed RNA polymerase I subunit RPA1 of Mus musculus (Mouse).